Reading from the N-terminus, the 493-residue chain is Probable cytosol aminopeptidase (493 aa).

Positions 265 and 270 each coordinate Mn(2+). Residue K277 is part of the active site. Mn(2+)-binding residues include D288, D347, and E349. The active site involves R351.

It belongs to the peptidase M17 family. Requires Mn(2+) as cofactor.

It is found in the cytoplasm. It carries out the reaction Release of an N-terminal amino acid, Xaa-|-Yaa-, in which Xaa is preferably Leu, but may be other amino acids including Pro although not Arg or Lys, and Yaa may be Pro. Amino acid amides and methyl esters are also readily hydrolyzed, but rates on arylamides are exceedingly low.. The enzyme catalyses Release of an N-terminal amino acid, preferentially leucine, but not glutamic or aspartic acids.. Its function is as follows. Presumably involved in the processing and regular turnover of intracellular proteins. Catalyzes the removal of unsubstituted N-terminal amino acids from various peptides. The polypeptide is Probable cytosol aminopeptidase (Hydrogenovibrio crunogenus (strain DSM 25203 / XCL-2) (Thiomicrospira crunogena)).